The sequence spans 85 residues: Toxin BmKaTx10 (85 aa).

Positions 1-19 (MNYLVMVSFALLLMTGVES) are cleaved as a signal peptide. Positions 21–83 (RDGYIALPHN…VPIRVPGRCH (63 aa)) constitute an LCN-type CS-alpha/beta domain. Cystine bridges form between C31–C82, C35–C55, C41–C65, and C45–C67.

The protein belongs to the long (4 C-C) scorpion toxin superfamily. Sodium channel inhibitor family. Alpha subfamily. Expressed by the venom gland.

It is found in the secreted. Its function is as follows. Alpha toxins bind voltage-independently at site-3 of sodium channels (Nav) and inhibit the inactivation of the activated channels, thereby blocking neuronal transmission. The protein is Toxin BmKaTx10 of Olivierus martensii (Manchurian scorpion).